The primary structure comprises 933 residues: 2-oxoglutarate dehydrogenase E1 component (933 aa).

The protein belongs to the alpha-ketoglutarate dehydrogenase family. Homodimer. Part of the 2-oxoglutarate dehydrogenase (OGDH) complex composed of E1 (2-oxoglutarate dehydrogenase), E2 (dihydrolipoamide succinyltransferase) and E3 (dihydrolipoamide dehydrogenase); the complex contains multiple copies of the three enzymatic components (E1, E2 and E3). Thiamine diphosphate is required as a cofactor.

It catalyses the reaction N(6)-[(R)-lipoyl]-L-lysyl-[protein] + 2-oxoglutarate + H(+) = N(6)-[(R)-S(8)-succinyldihydrolipoyl]-L-lysyl-[protein] + CO2. In terms of biological role, E1 component of the 2-oxoglutarate dehydrogenase (OGDH) complex which catalyzes the decarboxylation of 2-oxoglutarate, the first step in the conversion of 2-oxoglutarate to succinyl-CoA and CO(2). This Staphylococcus saprophyticus subsp. saprophyticus (strain ATCC 15305 / DSM 20229 / NCIMB 8711 / NCTC 7292 / S-41) protein is 2-oxoglutarate dehydrogenase E1 component.